The sequence spans 394 residues: RILP-like protein 1 (394 aa).

The RH1 domain maps to 2–89 (EGISALEKNV…RLERMDRIEK (88 aa)). The stretch at 68-327 (EMEELRLELD…EAEEENKLPQ (260 aa)) forms a coiled coil. Residues 282 to 347 (RPRFTLQELR…IPQESGIKRL (66 aa)) form the RH2 domain.

This sequence belongs to the RILPL family.

The protein localises to the cytoplasm. The protein resides in the cytosol. It localises to the cytoskeleton. It is found in the microtubule organizing center. Its subcellular location is the centrosome. The protein localises to the cell projection. The protein resides in the cilium. Plays a role in the regulation of cell shape and polarity. Plays a role in cellular protein transport, including protein transport away from primary cilia. Neuroprotective protein. This Xenopus laevis (African clawed frog) protein is RILP-like protein 1 (rilpl1).